The sequence spans 311 residues: Olfactory receptor 5L1 (311 aa).

The Extracellular portion of the chain corresponds to 1–25 (MGKENCTTVAEFILLGLSDVPELRV). N5 is a glycosylation site (N-linked (GlcNAc...) asparagine). Residues 26-46 (CLFLLFLLIYGVTLLANLGMI) traverse the membrane as a helical segment. Residues 47-54 (ALIQVSSR) are Cytoplasmic-facing. A helical membrane pass occupies residues 55-75 (LHTPMYFFLSHLSSVDFCYSS). Residues 76–99 (IIVPKMLANIFNKDKAISFLGCMV) are Extracellular-facing. Cysteines 97 and 189 form a disulfide. Residues 100-120 (QFYLFCTCVVTEVFLLAVMAY) traverse the membrane as a helical segment. The Cytoplasmic segment spans residues 121 to 139 (DRFVAICNPLLYTVTMSWK). The helical transmembrane segment at 140–160 (VRVELASCCYFCGTVCSLIHL) threads the bilayer. Residues 161–196 (CLALRIPFYRSNVINHFFCDLPPVLSLACSDITVNE) lie on the Extracellular side of the membrane. N195 is a glycosylation site (N-linked (GlcNAc...) asparagine). The chain crosses the membrane as a helical span at residues 197–217 (TLLFLVATLNESVTIMIILTS). At 218 to 237 (YLLILTTILKMGSAEGRHKA) the chain is on the cytoplasmic side. A helical membrane pass occupies residues 238–258 (FSTCASHLTAITVFHGTVLSI). Residues 259 to 271 (YCRPSSGNSGDAD) are Extracellular-facing. A helical membrane pass occupies residues 272-292 (KVATVFYTVVIPMLNSVIYSL). At 293–311 (RNKDVKEALRKVMGSKIHS) the chain is on the cytoplasmic side.

This sequence belongs to the G-protein coupled receptor 1 family.

It localises to the cell membrane. Its function is as follows. Odorant receptor. The chain is Olfactory receptor 5L1 (OR5L1) from Homo sapiens (Human).